Reading from the N-terminus, the 253-residue chain is tRNA pseudouridine synthase A (253 aa).

Catalysis depends on Asp-52, which acts as the Nucleophile. Tyr-111 serves as a coordination point for substrate.

It belongs to the tRNA pseudouridine synthase TruA family. As to quaternary structure, homodimer.

The catalysed reaction is uridine(38/39/40) in tRNA = pseudouridine(38/39/40) in tRNA. In terms of biological role, formation of pseudouridine at positions 38, 39 and 40 in the anticodon stem and loop of transfer RNAs. In Methylobacterium radiotolerans (strain ATCC 27329 / DSM 1819 / JCM 2831 / NBRC 15690 / NCIMB 10815 / 0-1), this protein is tRNA pseudouridine synthase A.